Consider the following 204-residue polypeptide: Linker for activation of T-cells family member 2 (204 aa).

The Extracellular portion of the chain corresponds to Met1–Leu7. A helical; Signal-anchor for type III membrane protein transmembrane segment spans residues Leu8–Val28. 2 S-palmitoyl cysteine lipidation sites follow: Cys27 and Cys30. Topologically, residues Gln29–Ile204 are cytoplasmic. A Phosphotyrosine modification is found at Tyr60. Residues Ser61 and Ser96 each carry the phosphoserine modification. Phosphotyrosine occurs at positions 140, 161, and 193. The disordered stretch occupies residues Lys147–Ile204.

When phosphorylated, interacts with GRB2. May also interact with SOS1, GAB1 and CBL. Post-translationally, phosphorylated on tyrosines following cross-linking of BCR in B-cells, high affinity IgG receptor (FCGR1) in myeloid cells, or high affinity IgE receptor (FCER1) in mast cells; which induces the recruitment of GRB2.

It localises to the cell membrane. Functionally, involved in FCER1 (high affinity immunoglobulin epsilon receptor)-mediated signaling in mast cells. May also be involved in BCR (B-cell antigen receptor)-mediated signaling in B-cells and FCGR1 (high affinity immunoglobulin gamma Fc receptor I)-mediated signaling in myeloid cells. Couples activation of these receptors and their associated kinases with distal intracellular events through the recruitment of GRB2. The polypeptide is Linker for activation of T-cells family member 2 (Lat2) (Rattus norvegicus (Rat)).